The following is a 443-amino-acid chain: Exodeoxyribonuclease 7 large subunit (443 aa).

Belongs to the XseA family. As to quaternary structure, heterooligomer composed of large and small subunits.

Its subcellular location is the cytoplasm. It carries out the reaction Exonucleolytic cleavage in either 5'- to 3'- or 3'- to 5'-direction to yield nucleoside 5'-phosphates.. Functionally, bidirectionally degrades single-stranded DNA into large acid-insoluble oligonucleotides, which are then degraded further into small acid-soluble oligonucleotides. This Legionella pneumophila (strain Paris) protein is Exodeoxyribonuclease 7 large subunit.